A 375-amino-acid polypeptide reads, in one-letter code: Killer cell immunoglobulin-like receptor 2DL5A (375 aa).

The N-terminal stretch at 1 to 21 (MSLMVISMACVGFFLLQGAWT) is a signal peptide. The Extracellular segment spans residues 22 to 238 (HEGGQDKPLL…PSSKTGIRRH (217 aa)). Ig-like C2-type domains are found at residues 42 to 102 (GGHV…HPRS) and 137 to 200 (GENV…LHDS). A disulfide bond links Cys49 and Cys95. 3 N-linked (GlcNAc...) asparagine glycosylation sites follow: Asn139, Asn173, and Asn218. Cysteines 144 and 193 form a disulfide. The segment at 213–233 (VSVTGNSSSSSSSPTEPSSKT) is disordered. Low complexity predominate over residues 219–231 (SSSSSSSPTEPSS). The chain crosses the membrane as a helical span at residues 239 to 259 (LHILIGTSVAIILFIILFFFL). Over 260–375 (LHCCCSNKKN…ASSHVPAAGI (116 aa)) the chain is Cytoplasmic. Positions 334-375 (AKPRSLSPAHKHHSQALRGSSRETTALSQNRVASSHVPAAGI) are disordered. Residues 355-366 (RETTALSQNRVA) show a composition bias toward polar residues.

Belongs to the immunoglobulin superfamily.

Its subcellular location is the cell membrane. Functionally, receptor on natural killer (NK) cells for HLA-C alleles. Inhibits the activity of NK cells thus preventing cell lysis. This is Killer cell immunoglobulin-like receptor 2DL5A (KIR2DL5A) from Homo sapiens (Human).